Consider the following 478-residue polypeptide: Transcript termination protein A18 (478 aa).

The 157-residue stretch at 98–254 folds into the Helicase ATP-binding domain; sequence KLSTHRPMYM…NDVVNVLKVS (157 aa). 111–118 contacts ATP; the sequence is LSCGFGKT. The DESH box motif lies at 204 to 207; sequence DESH. Residues 302–468 enclose the Helicase C-terminal domain; it reads PRNNLIVETV…GIEGTKEEPV (167 aa).

This sequence belongs to the helicase family. Poxviruses subfamily. As to quaternary structure, interacts with G2. Might be part of a transcription complex composed at least of G2, A18, and H5.

Its subcellular location is the virion. Its function is as follows. DNA helicase which seems to act as a postreplicative transcription termination factor. Involved in ATP-dependent release of nascent RNA. Forms a stable complex with single-stranded DNA, and to a lesser extent RNA. This chain is Transcript termination protein A18, found in Rabbit fibroma virus (strain Kasza) (RFV).